We begin with the raw amino-acid sequence, 98 residues long: Bombyxin E-1 (98 aa).

The N-terminal stretch at 1–19 is a signal peptide; it reads MNRPVFLVLLLTGFLCIAA. A Pyrrolidone carboxylic acid modification is found at Q20. 3 disulfides stabilise this stretch: C29/C85, C41/C98, and C84/C89. Residues 50–75 constitute a propeptide, c peptide like; that stretch reads SESSLASYSSRGWPWLPTPNFNKRAI.

The protein belongs to the insulin family. As to quaternary structure, heterodimer of a B chain and an A chain linked by two disulfide bonds.

Its subcellular location is the secreted. Functionally, PTTH is a brain peptide responsible for activation of prothoracic glands to produce ecdysone in insects. In Bombyx mori (Silk moth), this protein is Bombyxin E-1 (BBXE1).